A 151-amino-acid polypeptide reads, in one-letter code: NADPH-dependent 7-cyano-7-deazaguanine reductase (151 aa).

Cysteine 51 serves as the catalytic Thioimide intermediate. Residue aspartate 58 is the Proton donor of the active site. Residues 73–75 (VES) and 92–93 (HE) each bind substrate.

Belongs to the GTP cyclohydrolase I family. QueF type 1 subfamily.

Its subcellular location is the cytoplasm. It catalyses the reaction 7-aminomethyl-7-carbaguanine + 2 NADP(+) = 7-cyano-7-deazaguanine + 2 NADPH + 3 H(+). It functions in the pathway tRNA modification; tRNA-queuosine biosynthesis. Catalyzes the NADPH-dependent reduction of 7-cyano-7-deazaguanine (preQ0) to 7-aminomethyl-7-deazaguanine (preQ1). This chain is NADPH-dependent 7-cyano-7-deazaguanine reductase, found in Bacteroides thetaiotaomicron (strain ATCC 29148 / DSM 2079 / JCM 5827 / CCUG 10774 / NCTC 10582 / VPI-5482 / E50).